The following is a 389-amino-acid chain: Zip homologous protein 3 (389 aa).

The RING-type zinc finger occupies 6 to 43; the sequence is CNKCFNRKPPDGFFISSCFHIFCTKCAKADLAVCLICK. The stretch at 123 to 164 forms a coiled coil; it reads LAEATAWIQMAEKKLQASEEERVKAEREIEECQAKLKSMTNL. The tract at residues 366–389 is disordered; sequence ISSQPGYLAQRKPINGRSFIGPAD.

As to quaternary structure, interacts with zhp-4; the interaction is required for their localization along paired chromosomes and stability, and for the formation of chiasma during meiotic recombination. As to expression, expressed througout the gonad (at protein level). Expressed in the germline.

The protein resides in the chromosome. Recruited co-dependently with zhp-4 to the synaptonemal complex between homologous chromosome pairs to regulate the formation and number of crossover events between homologs during meiotic recombination. In the early stages of pachytene, in complex with zhp-4, recruited by the zhp-1-zhp-2 heterodimer to designated crossover sites along the homolog pair to stabilize other pro-crossover factors such as rmh-1, msh-5 and cosa-1. This in turn facilitates crossover and promotes the formation of chiasma in each meiotic nucleus at the late pachytene stage of meiosis. Plays a role in the segregation of homologous chromosomes following the completion of crossovers. Together with him-14 and msh-5 plays a role in the activation of DNA damage-dependent apoptosis at the DNA damage checkpoint in pachytene cells. The polypeptide is Zip homologous protein 3 (Caenorhabditis elegans).